The sequence spans 403 residues: Acetate kinase (403 aa).

Asn8 lines the Mg(2+) pocket. Residue Lys15 coordinates ATP. Arg90 provides a ligand contact to substrate. Residue Asp147 is the Proton donor/acceptor of the active site. ATP contacts are provided by residues 207-211, 282-284, and 330-334; these read HLGSG, DLR, and GVGEN. Residue Glu384 coordinates Mg(2+).

The protein belongs to the acetokinase family. Homodimer. The cofactor is Mg(2+). Mn(2+) serves as cofactor.

Its subcellular location is the cytoplasm. The enzyme catalyses acetate + ATP = acetyl phosphate + ADP. Its pathway is metabolic intermediate biosynthesis; acetyl-CoA biosynthesis; acetyl-CoA from acetate: step 1/2. Functionally, catalyzes the formation of acetyl phosphate from acetate and ATP. Can also catalyze the reverse reaction. In Exiguobacterium sibiricum (strain DSM 17290 / CCUG 55495 / CIP 109462 / JCM 13490 / 255-15), this protein is Acetate kinase.